The chain runs to 277 residues: MKQLYGVIGNPIGHSLSPVMHNDAFEHLNMDAHYHAFLVKEEVLGEAVRGLKALGISGFNVTTPHKVAIMDYLDEIDPLAKQIGAVNTVVHKDGKLIGYNTDGIGFVRALQSISNEPLQEKRILLLGAGGASRAIYFSLADVGVKEIDVANRTVDKAKELIAACTATVHSVALSLEKATKEQGNYDIIIQTTTIGMHPRVEHTPLQISSLKKGTIVSDIIYNPFETKILCEAKEQGAIIQNGIDMFVYQGALAFEMWTGCVPNIERMKQLVIRKLGG.

Shikimate-binding positions include 15-17 and Thr-62; that span reads SLS. Lys-66 (proton acceptor) is an active-site residue. Residues Asn-87 and Asp-102 each coordinate shikimate. Residues 127–131, 151–156, and Ile-219 each bind NADP(+); these read GAGGA and NRTVDK. Tyr-221 is a shikimate binding site. NADP(+) is bound at residue Gly-242.

The protein belongs to the shikimate dehydrogenase family. Homodimer.

The catalysed reaction is shikimate + NADP(+) = 3-dehydroshikimate + NADPH + H(+). Its pathway is metabolic intermediate biosynthesis; chorismate biosynthesis; chorismate from D-erythrose 4-phosphate and phosphoenolpyruvate: step 4/7. Involved in the biosynthesis of the chorismate, which leads to the biosynthesis of aromatic amino acids. Catalyzes the reversible NADPH linked reduction of 3-dehydroshikimate (DHSA) to yield shikimate (SA). In Bacillus cereus (strain ZK / E33L), this protein is Shikimate dehydrogenase (NADP(+)).